Consider the following 880-residue polypeptide: Alanine--tRNA ligase (880 aa).

Positions 568, 572, 670, and 674 each coordinate Zn(2+).

Belongs to the class-II aminoacyl-tRNA synthetase family. Zn(2+) serves as cofactor.

The protein localises to the cytoplasm. The enzyme catalyses tRNA(Ala) + L-alanine + ATP = L-alanyl-tRNA(Ala) + AMP + diphosphate. In terms of biological role, catalyzes the attachment of alanine to tRNA(Ala) in a two-step reaction: alanine is first activated by ATP to form Ala-AMP and then transferred to the acceptor end of tRNA(Ala). Also edits incorrectly charged Ser-tRNA(Ala) and Gly-tRNA(Ala) via its editing domain. This chain is Alanine--tRNA ligase, found in Enterococcus faecalis (strain ATCC 700802 / V583).